We begin with the raw amino-acid sequence, 61 residues long: Potassium channel toxin kappa-KTx 2.8 (61 aa).

The N-terminal stretch at 1–21 is a signal peptide; it reads GTVYVFLLLLAFGIFTDISNA. A propeptide spanning residues 22–35 is cleaved from the precursor; it reads CSEQMDDEDSYEVE. 2 disulfides stabilise this stretch: C41-C59 and C45-C55.

Belongs to the short scorpion toxin superfamily. Potassium channel inhibitor kappa-KTx family. Kappa-KTx 2 subfamily. Expressed by the venom gland.

The protein resides in the secreted. Voltage-gated potassium channel inhibitor (Kv) that acts on Kv1.3/KCNA3 and Kv7.1/KCNQ1. 1 uM of the toxin inhibits Kv1.3/KCNA3 currents by 35.1%, whereas 10 uM of the toxin inhibits Kv7.1/KCNQ1 currents by 44.9%. The chain is Potassium channel toxin kappa-KTx 2.8 from Heterometrus petersii (Asian forest scorpion).